We begin with the raw amino-acid sequence, 300 residues long: uncharacterized protein (300 aa).

The active-site Proton acceptor is histidine 274.

It belongs to the AB hydrolase superfamily. In terms of assembly, monomer.

It carries out the reaction a carboxylic ester + H2O = an alcohol + a carboxylate + H(+). This is an uncharacterized protein from Bacillus subtilis (strain 168).